Here is a 256-residue protein sequence, read N- to C-terminus: L-rhamnose 1-dehydrogenase (NAD(P)(+)) (256 aa).

The NADP(+) site is built by glycine 12, serine 14, arginine 15, isoleucine 17, serine 37, aspartate 66, alanine 67, and asparagine 93. The Proton donor role is filled by serine 146. Serine 146, serine 148, glutamine 156, and tyrosine 159 together coordinate beta-L-rhamnose. Residues tyrosine 159 and lysine 163 each contribute to the NADP(+) site. The active-site Proton acceptor is tyrosine 159. Catalysis depends on lysine 163, which acts as the Lowers pKa of active site Tyr. Position 191 (threonine 191) interacts with beta-L-rhamnose. An NADP(+)-binding site is contributed by isoleucine 192. Asparagine 197 contributes to the beta-L-rhamnose binding site.

It belongs to the short-chain dehydrogenases/reductases (SDR) family.

The enzyme catalyses L-rhamnofuranose + NAD(+) = L-rhamnono-1,4-lactone + NADH + H(+). It carries out the reaction L-rhamnofuranose + NADP(+) = L-rhamnono-1,4-lactone + NADPH + H(+). It functions in the pathway carbohydrate degradation; L-rhamnose degradation. Functionally, NAD(P)-dependent dehydrogenase that catalyzes the oxidation of L-rhamnose to L-rhamnono-1,4-lactone. Also shows high activity with L-lyxose and low activity with L-mannose and L-fucose. Can utilize either NAD(+) or NADP(+), with a strong preference for NADP(+). Catalyzes the first step in an alternative pathway for rhamnose utilization that does not involve phosphorylated intermediates. This is L-rhamnose 1-dehydrogenase (NAD(P)(+)) from Azotobacter vinelandii (strain DJ / ATCC BAA-1303).